We begin with the raw amino-acid sequence, 378 residues long: uncharacterized protein (378 aa).

A compositionally biased stretch (low complexity) spans 150-176 (TTTATTSNNRFNNNNSNNNNINNNNDN). The disordered stretch occupies residues 150-187 (TTTATTSNNRFNNNNSNNNNINNNNDNNNKEQKKESRC). The span at 177 to 187 (NNKEQKKESRC) shows a compositional bias: basic and acidic residues.

This is an uncharacterized protein from Dictyostelium discoideum (Social amoeba).